The primary structure comprises 311 residues: Coproporphyrin III ferrochelatase 1 (311 aa).

Residues Y12, R29, R45–Y46, S53, and Y124 each bind Fe-coproporphyrin III. H182 and E263 together coordinate Fe(2+).

This sequence belongs to the ferrochelatase family.

The protein resides in the cytoplasm. It carries out the reaction Fe-coproporphyrin III + 2 H(+) = coproporphyrin III + Fe(2+). It participates in porphyrin-containing compound metabolism; protoheme biosynthesis. In terms of biological role, involved in coproporphyrin-dependent heme b biosynthesis. Catalyzes the insertion of ferrous iron into coproporphyrin III to form Fe-coproporphyrin III. The sequence is that of Coproporphyrin III ferrochelatase 1 from Bacillus cereus (strain ATCC 10987 / NRS 248).